A 298-amino-acid chain; its full sequence is Osmoprotective compounds uptake permease protein GgtD (298 aa).

7 helical membrane-spanning segments follow: residues 26 to 46, 97 to 117, 126 to 146, 158 to 178, 207 to 227, 231 to 251, and 263 to 283; these read IHIAILTIAFIWTLPSLGLFI, IAVPATVIPIAIATFAAYAFA, LLFILVVCLLVVPLQTTLIPV, TFLGVWLAHTAYGLPLGIYLL, LIVPLSMPAIASFAVFQFLWV, LLVALVYLGGTADVAPVTIQL, and YLLTAGAFISMIVPLMVFFGL. The ABC transmembrane type-1 domain maps to 91 to 283; sequence FLNSLTIAVP…IVPLMVFFGL (193 aa).

This sequence belongs to the binding-protein-dependent transport system permease family. In terms of assembly, the complex is composed of two ATP-binding proteins (GgtA), two transmembrane proteins (GgtC and GgtD) and a solute-binding protein (GgtB).

The protein localises to the cell membrane. Part of the ABC transporter complex GgtABCD involved in the uptake of the osmoprotective compounds glucosylglycerol (GG), sucrose and trehalose. Responsible for the translocation of the substrate across the membrane. The chain is Osmoprotective compounds uptake permease protein GgtD from Synechocystis sp. (strain ATCC 27184 / PCC 6803 / Kazusa).